The following is a 414-amino-acid chain: Gamma-glutamyl phosphate reductase (414 aa).

The protein belongs to the gamma-glutamyl phosphate reductase family.

It is found in the cytoplasm. It catalyses the reaction L-glutamate 5-semialdehyde + phosphate + NADP(+) = L-glutamyl 5-phosphate + NADPH + H(+). It functions in the pathway amino-acid biosynthesis; L-proline biosynthesis; L-glutamate 5-semialdehyde from L-glutamate: step 2/2. Functionally, catalyzes the NADPH-dependent reduction of L-glutamate 5-phosphate into L-glutamate 5-semialdehyde and phosphate. The product spontaneously undergoes cyclization to form 1-pyrroline-5-carboxylate. This chain is Gamma-glutamyl phosphate reductase, found in Thermoanaerobacter pseudethanolicus (strain ATCC 33223 / 39E) (Clostridium thermohydrosulfuricum).